A 1012-amino-acid polypeptide reads, in one-letter code: Beta-alanine-activating enzyme (1012 aa).

Residues 177 to 185, Asp-411, Arg-426, and Lys-516 contribute to the ATP site; that span reads TTGTTGKPK.

It belongs to the ATP-dependent AMP-binding enzyme family.

Covalently binds beta-alanine in an ATP-dependent manner to form a thioester bond with its phosphopantetheine group and transfers it to an, as yet, unknown acceptor. May be required for a post-translational protein modification or for post-transcriptional modification of an RNA. This Drosophila melanogaster (Fruit fly) protein is Beta-alanine-activating enzyme.